The sequence spans 323 residues: Sphingolipid delta(4)-desaturase DES1 (323 aa).

Glycine 2 is lipidated: N-myristoyl glycine. A run of 2 helical transmembrane segments spans residues 41-61 and 68-88; these read PNLI…FYIV and WVIF…TLGI. Positions 89-93 match the Histidine box-1 motif; that stretch reads HEIAH. A helical transmembrane segment spans residues 107 to 127; the sequence is WFGMFANLPIGIPYSVSFKSY. The short motif at 128–132 is the Histidine box-2 element; the sequence is HMDHH. The next 3 helical transmembrane spans lie at 152 to 172, 184 to 204, and 209 to 229; these read FFCT…FYAF, YLEV…YYFL, and LVYM…SGHF. The Histidine box-3 signature appears at 259–263; sequence HNEHH. The residue at position 307 (serine 307) is a Phosphoserine.

It belongs to the fatty acid desaturase type 1 family. DEGS subfamily. In terms of assembly, interacts with RLBP1; the interaction increases synthesis of chromophore-precursors by DEGS1. Myristoylation can target the enzyme to the mitochondria leading to an increase in ceramide levels.

Its subcellular location is the mitochondrion membrane. It localises to the endoplasmic reticulum membrane. The enzyme catalyses an N-acylsphinganine + 2 Fe(II)-[cytochrome b5] + O2 + 2 H(+) = an N-acylsphing-4-enine + 2 Fe(III)-[cytochrome b5] + 2 H2O. It carries out the reaction all-trans-retinol = 11-cis-retinol. It catalyses the reaction all-trans-retinol = 9-cis-retinol. The catalysed reaction is all-trans-retinol = 13-cis-retinol. The enzyme catalyses 11-cis-retinol = 13-cis-retinol. It carries out the reaction 11-cis-retinol = 9-cis-retinol. Its function is as follows. Has sphingolipid-delta-4-desaturase activity. Converts D-erythro-sphinganine to D-erythro-sphingosine (E-sphing-4-enine). Catalyzes the equilibrium isomerization of retinols. This chain is Sphingolipid delta(4)-desaturase DES1 (DEGS1), found in Pongo abelii (Sumatran orangutan).